Reading from the N-terminus, the 424-residue chain is uncharacterized protein (424 aa).

Belongs to the serpin family.

This is an uncharacterized protein from Methanosarcina acetivorans (strain ATCC 35395 / DSM 2834 / JCM 12185 / C2A).